A 564-amino-acid polypeptide reads, in one-letter code: Kelch repeat and BTB domain-containing protein A55 (564 aa).

One can recognise a BTB domain in the interval 21–88 (CDISIVINDE…IYGIPLSLTN (68 aa)). 6 Kelch repeats span residues 252-297 (IELI…VLDN), 298-346 (IIYM…ADDE), 347-395 (YIYC…MLNG), 397-441 (IYVM…VHDG), 442-492 (KIYI…SAHN), and 494-539 (LYVG…CEPI).

Belongs to the poxviruses A55 protein family. In terms of assembly, interacts (via BTB domain) with host CUL3.

The protein localises to the host cytoplasm. In terms of biological role, probable substrate-specific adapter of CUL3-containing E3 ubiquitin-protein ligases which mediate the ubiquitination and subsequent proteasomal degradation of host target proteins. The sequence is that of Kelch repeat and BTB domain-containing protein A55 (KBTB1) from Bos taurus (Bovine).